The sequence spans 183 residues: Protein FAM180B (183 aa).

An N-terminal signal peptide occupies residues 1–23 (MAATLQFLVCLVVAICLLSGVTT).

Belongs to the FAM180 family.

It localises to the secreted. This Homo sapiens (Human) protein is Protein FAM180B (FAM180B).